Reading from the N-terminus, the 100-residue chain is NADH-quinone oxidoreductase subunit K (100 aa).

3 helical membrane passes run 4-24 (YEYYVVLSGLLMVLGLIGIII), 29-49 (IAMLLSTELMLNAVNIAFVAF), and 60-80 (VFVFFILTIAAAEAAVGLGLI).

This sequence belongs to the complex I subunit 4L family. As to quaternary structure, NDH-1 is composed of 14 different subunits. Subunits NuoA, H, J, K, L, M, N constitute the membrane sector of the complex.

It is found in the cell inner membrane. It carries out the reaction a quinone + NADH + 5 H(+)(in) = a quinol + NAD(+) + 4 H(+)(out). NDH-1 shuttles electrons from NADH, via FMN and iron-sulfur (Fe-S) centers, to quinones in the respiratory chain. The immediate electron acceptor for the enzyme in this species is believed to be ubiquinone. Couples the redox reaction to proton translocation (for every two electrons transferred, four hydrogen ions are translocated across the cytoplasmic membrane), and thus conserves the redox energy in a proton gradient. The sequence is that of NADH-quinone oxidoreductase subunit K from Persephonella marina (strain DSM 14350 / EX-H1).